Reading from the N-terminus, the 397-residue chain is Inositol 3-kinase (397 aa).

Residues Ser228, Gly278–Asp281, and Asn305 each bind ATP. The active-site Proton acceptor is Asp281.

This sequence belongs to the carbohydrate kinase pfkB family. In terms of tissue distribution, expressed in roots, leaf blade shoots, leaf sheath shoots and panicles.

It carries out the reaction myo-inositol + ATP = 1D-myo-inositol 3-phosphate + ADP + H(+). Kinase that phosphorylates myo-inositol to produce multiple myo-inositol monophosphates. Participates in phytic acid biosynthesis in developing seeds. Phytic acid is the primary storage form of phosphorus in cereal grains and other plant seeds. In Oryza sativa subsp. japonica (Rice), this protein is Inositol 3-kinase.